The chain runs to 496 residues: Alanine aminotransferase 1 (496 aa).

A2 carries the post-translational modification N-acetylalanine. At T22 the chain carries Phosphothreonine. K314 is subject to N6-(pyridoxal phosphate)lysine.

The protein belongs to the class-I pyridoxal-phosphate-dependent aminotransferase family. Alanine aminotransferase subfamily. As to quaternary structure, homodimer. It depends on pyridoxal 5'-phosphate as a cofactor. In terms of tissue distribution, mainly expressed in liver, intestine, colon and white adipose tissue.

It is found in the cytoplasm. It carries out the reaction L-alanine + 2-oxoglutarate = pyruvate + L-glutamate. The protein operates within amino-acid degradation; L-alanine degradation via transaminase pathway; pyruvate from L-alanine: step 1/1. Its function is as follows. Catalyzes the reversible transamination between alanine and 2-oxoglutarate to form pyruvate and glutamate. Participates in cellular nitrogen metabolism and also in liver gluconeogenesis starting with precursors transported from skeletal muscles. The protein is Alanine aminotransferase 1 (Gpt) of Mus musculus (Mouse).